The following is a 506-amino-acid chain: Lysine--tRNA ligase (506 aa).

Residues Glu415 and Glu422 each contribute to the Mg(2+) site.

This sequence belongs to the class-II aminoacyl-tRNA synthetase family. In terms of assembly, homodimer. Mg(2+) is required as a cofactor.

It is found in the cytoplasm. It catalyses the reaction tRNA(Lys) + L-lysine + ATP = L-lysyl-tRNA(Lys) + AMP + diphosphate. The chain is Lysine--tRNA ligase from Erwinia tasmaniensis (strain DSM 17950 / CFBP 7177 / CIP 109463 / NCPPB 4357 / Et1/99).